A 297-amino-acid chain; its full sequence is Acetyl-coenzyme A carboxylase carboxyl transferase subunit beta (297 aa).

The 270-residue stretch at 27–296 folds into the CoA carboxyltransferase N-terminal domain; it reads LWHKCPSCEA…PEQAREAAAV (270 aa). Residues Cys-31, Cys-34, Cys-50, and Cys-53 each contribute to the Zn(2+) site. The C4-type zinc-finger motif lies at 31–53; it reads CPSCEAVLYRPELEKTLDVCPKC.

The protein belongs to the AccD/PCCB family. Acetyl-CoA carboxylase is a heterohexamer composed of biotin carboxyl carrier protein (AccB), biotin carboxylase (AccC) and two subunits each of ACCase subunit alpha (AccA) and ACCase subunit beta (AccD). Zn(2+) serves as cofactor.

It is found in the cytoplasm. It carries out the reaction N(6)-carboxybiotinyl-L-lysyl-[protein] + acetyl-CoA = N(6)-biotinyl-L-lysyl-[protein] + malonyl-CoA. It functions in the pathway lipid metabolism; malonyl-CoA biosynthesis; malonyl-CoA from acetyl-CoA: step 1/1. Functionally, component of the acetyl coenzyme A carboxylase (ACC) complex. Biotin carboxylase (BC) catalyzes the carboxylation of biotin on its carrier protein (BCCP) and then the CO(2) group is transferred by the transcarboxylase to acetyl-CoA to form malonyl-CoA. The polypeptide is Acetyl-coenzyme A carboxylase carboxyl transferase subunit beta (Pseudomonas putida (strain GB-1)).